The sequence spans 391 residues: PPE family protein PPE15 (391 aa).

The tract at residues 312–367 is eukaryotic-like SH3 domain; that stretch reads LGEATLVGRLSVPAAWSTAAPATTAGATALEGSGWTVAAEEAGPVTGMMPGMASAA.

The protein belongs to the mycobacterial PPE family. As to quaternary structure, forms a heterodimer with PE8. The dimer forms a 1:1:1 heterotrimeric complex with EspG5. PPE15 interacts directly with EspG5. Interacts via the C-terminal region with host Toll-like receptor 4 (TLR4). Interacts, also via the C-terminal region, with two cytosolic subunits of the host NOX complex, p47phox (NCF1) and p67phox (NCF2).

The protein resides in the secreted. It localises to the host mitochondrion. In terms of biological role, may play a critical role in the homeostasis of triacylglycerol-containing lipid droplets in M.tuberculosis and influence the entry of the pathogen into a dormant state. Is recognized by host TLR4 receptor at the macrophage cell surface, which modulates the host immune response, induces mitochondrial stress and perturbations, and induces macrophage apoptosis leading to pathogen persistence. Also downregulates NOX-mediated reactive oxygen species (ROS) generation in THP1 macrophages, which increases intracellular survival of bacteria. PPE15 interacts with two subunits of the host NADPH oxidase (NOX) complex in the cytosol of macrophages and prevents their migration to the membrane, which inhibits the assembly of the NOX complex at the plasma membrane of THP1 macrophages. This leads to reduced NOX activity and diminished ROS generation. This chain is PPE family protein PPE15 (PPE15), found in Mycobacterium tuberculosis (strain CDC 1551 / Oshkosh).